A 599-amino-acid chain; its full sequence is MSDLSHIRNFSIIAHIDHGKSTLADRFIQMCGGLSDREMEAQVLDSMDLERERGITIKAHSVTLHYKAQDGKTYQLNFIDTPGHVDFTYEVSRSLAACEGALLVVDAGQGVEAQSVANCYTAIEQGLEVMPVLNKMDLPQAEPERVKEEIESIIGIDATDAVACSAKSGMGVLEVLERLVTVIPAPEGEIEAPLQALIIDSWFDNYLGVVSLVRVKNGRVKKGDKILVKSTGKVHQVDSVGVFTPKHTETADLKAGEVGFIIAGIKDIHGAPVGDTLTLNNTPDVEVLPGFKRVKPQVYAGLFPVSSDDFEDFRDALQKLTLNDSSLQYEPESSEALGFGFRCGFLGMLHMEIIQERLEREYDLDLITTAPTVVFEIVQKNGEIIYVDNPSKLPDLASIQEMREPICRATILVPKDHLGNVITLCIEKRGVQRDMHFLSGQVQVIYDLPMNEVVLDFFDRLKSTSRGYASLDYSFDRFEPSNLVRLDVLINGEKVDALALIVHRDNAPYKGRQLVEKMKELIPRQMFDVAIQAAIGGQIIARSTVKALRKNVLAKCYGGDVSRKRKLLEKQKAGKKRMKQVGSVEIPQEAFLAVLKVDS.

The 183-residue stretch at 5–187 folds into the tr-type G domain; the sequence is SHIRNFSIIA…RLVTVIPAPE (183 aa). GTP-binding positions include 17 to 22 and 134 to 137; these read DHGKST and NKMD.

The protein belongs to the TRAFAC class translation factor GTPase superfamily. Classic translation factor GTPase family. LepA subfamily.

The protein localises to the cell inner membrane. The catalysed reaction is GTP + H2O = GDP + phosphate + H(+). In terms of biological role, required for accurate and efficient protein synthesis under certain stress conditions. May act as a fidelity factor of the translation reaction, by catalyzing a one-codon backward translocation of tRNAs on improperly translocated ribosomes. Back-translocation proceeds from a post-translocation (POST) complex to a pre-translocation (PRE) complex, thus giving elongation factor G a second chance to translocate the tRNAs correctly. Binds to ribosomes in a GTP-dependent manner. The chain is Elongation factor 4 from Pseudomonas paraeruginosa (strain DSM 24068 / PA7) (Pseudomonas aeruginosa (strain PA7)).